The sequence spans 61 residues: Large ribosomal subunit protein bL32 (61 aa).

Belongs to the bacterial ribosomal protein bL32 family.

The chain is Large ribosomal subunit protein bL32 from Cytophaga hutchinsonii (strain ATCC 33406 / DSM 1761 / CIP 103989 / NBRC 15051 / NCIMB 9469 / D465).